Here is a 172-residue protein sequence, read N- to C-terminus: Ribosome maturation factor RimM (172 aa).

One can recognise a PRC barrel domain in the interval 96-168; the sequence is DGEFYYHEII…RVQVELMEGL (73 aa).

Belongs to the RimM family. As to quaternary structure, binds ribosomal protein uS19.

The protein localises to the cytoplasm. An accessory protein needed during the final step in the assembly of 30S ribosomal subunit, possibly for assembly of the head region. Essential for efficient processing of 16S rRNA. May be needed both before and after RbfA during the maturation of 16S rRNA. It has affinity for free ribosomal 30S subunits but not for 70S ribosomes. The polypeptide is Ribosome maturation factor RimM (Streptococcus agalactiae serotype Ia (strain ATCC 27591 / A909 / CDC SS700)).